The following is a 333-amino-acid chain: Holliday junction branch migration complex subunit RuvB (333 aa).

The segment at 1–182 (MTNRILDMEQ…FGITGHMEYY (182 aa)) is large ATPase domain (RuvB-L). ATP is bound by residues leucine 21, arginine 22, glycine 63, lysine 66, threonine 67, threonine 68, 129–131 (EDF), arginine 172, tyrosine 182, and arginine 219. Threonine 67 provides a ligand contact to Mg(2+). Residues 183–253 (ELADLTEIVE…ITDKALTMLD (71 aa)) are small ATPAse domain (RuvB-S). The tract at residues 256–333 (REGLDYVDQK…EHLGYPYTEK (78 aa)) is head domain (RuvB-H). Arginine 292, arginine 311, arginine 313, and arginine 316 together coordinate DNA.

It belongs to the RuvB family. Homohexamer. Forms an RuvA(8)-RuvB(12)-Holliday junction (HJ) complex. HJ DNA is sandwiched between 2 RuvA tetramers; dsDNA enters through RuvA and exits via RuvB. An RuvB hexamer assembles on each DNA strand where it exits the tetramer. Each RuvB hexamer is contacted by two RuvA subunits (via domain III) on 2 adjacent RuvB subunits; this complex drives branch migration. In the full resolvosome a probable DNA-RuvA(4)-RuvB(12)-RuvC(2) complex forms which resolves the HJ.

It localises to the cytoplasm. The catalysed reaction is ATP + H2O = ADP + phosphate + H(+). Its function is as follows. The RuvA-RuvB-RuvC complex processes Holliday junction (HJ) DNA during genetic recombination and DNA repair, while the RuvA-RuvB complex plays an important role in the rescue of blocked DNA replication forks via replication fork reversal (RFR). RuvA specifically binds to HJ cruciform DNA, conferring on it an open structure. The RuvB hexamer acts as an ATP-dependent pump, pulling dsDNA into and through the RuvAB complex. RuvB forms 2 homohexamers on either side of HJ DNA bound by 1 or 2 RuvA tetramers; 4 subunits per hexamer contact DNA at a time. Coordinated motions by a converter formed by DNA-disengaged RuvB subunits stimulates ATP hydrolysis and nucleotide exchange. Immobilization of the converter enables RuvB to convert the ATP-contained energy into a lever motion, pulling 2 nucleotides of DNA out of the RuvA tetramer per ATP hydrolyzed, thus driving DNA branch migration. The RuvB motors rotate together with the DNA substrate, which together with the progressing nucleotide cycle form the mechanistic basis for DNA recombination by continuous HJ branch migration. Branch migration allows RuvC to scan DNA until it finds its consensus sequence, where it cleaves and resolves cruciform DNA. In Streptococcus suis (strain 98HAH33), this protein is Holliday junction branch migration complex subunit RuvB.